The primary structure comprises 105 residues: U-scoloptoxin(05)-Ssd1a (105 aa).

A signal peptide spans 1 to 24 (MKEAVKMSCLCIFVFLFLFSLTDA). The tract at residues 79–105 (HVPESNQKDGKVSTHMSSCNTDGCNAN) is disordered. Polar residues predominate over residues 92–105 (THMSSCNTDGCNAN).

Belongs to the scoloptoxin-05 family. In terms of processing, contains 4 disulfide bonds. In terms of tissue distribution, expressed by the venom gland.

Its subcellular location is the secreted. This is U-scoloptoxin(05)-Ssd1a from Scolopendra dehaani (Thai centipede).